A 788-amino-acid polypeptide reads, in one-letter code: Integrin beta-6 (788 aa).

Positions 1 to 21 (MGIELLCLFFLFLGRNDHVQG) are cleaved as a signal peptide. The 50-residue stretch at 22–71 (GCALGGAETCEDCLLIGPQCAWCSQENFTYLSGVGERCDTPANLLAKGCQ) folds into the PSI domain. The Extracellular segment spans residues 22–709 (GCALGGAETC…KDCPKPPNSP (688 aa)). Intrachain disulfides connect Cys23/Cys41, Cys31/Cys454, Cys34/Cys59, Cys44/Cys70, Cys197/Cys204, Cys252/Cys293, Cys394/Cys406, Cys426/Cys452, Cys456/Cys476, Cys467/Cys479, Cys481/Cys490, Cys492/Cys519, Cys502/Cys517, Cys511/Cys522, Cys524/Cys537, Cys539/Cys560, Cys544/Cys558, Cys552/Cys563, Cys565/Cys574, Cys576/Cys599, Cys583/Cys597, Cys591/Cys602, Cys604/Cys614, Cys617/Cys620, Cys624/Cys670, Cys630/Cys649, Cys633/Cys645, and Cys678/Cys702. N-linked (GlcNAc...) asparagine glycans are attached at residues Asn48 and Asn97. The VWFA domain maps to 131 to 371 (YPVDLYYLMD…QLIISAYEEL (241 aa)). The Mg(2+) site is built by Asp140, Ser142, and Ser144. Residues Ser144, Asp147, Asp148, and Glu179 each contribute to the Ca(2+) site. Residues Asn235, Asp237, Pro239, and Glu240 each contribute to the Ca(2+) site. Glu240 provides a ligand contact to Mg(2+). Asn260 carries N-linked (GlcNAc...) asparagine glycosylation. The Ca(2+) site is built by Asp271 and Lys355. Asn387 carries an N-linked (GlcNAc...) asparagine glycan. Residue Asn418 is glycosylated (N-linked (GlcNAc...) asparagine). I-EGF domains follow at residues 456-491 (CQKEVEVNSSKCNHGNGSFQCGVCACNPGHMGPHCE), 492-538 (CGED…PYCQ), 539-575 (CDDFSCVRHKGLLCGDNGDCECGECVCRSGWTGEYCN), and 576-615 (CTTSTDQCVSEDGVLCSGRGDCVCGKCICTNPGASGLTCE). Asn463 and Asn471 each carry an N-linked (GlcNAc...) asparagine glycan. Residues 710-730 (MIMLGVSLAILLIGVVLLCIW) form a helical membrane-spanning segment. The interval 731–758 (KLLVSFHDRKEVAKFEAERSKAKWQTGT) is interaction with HAX1. Residues 731-788 (KLLVSFHDRKEVAKFEAERSKAKWQTGTNPLYRGSTSTFKNVTYKHREKQKVDLSMDG) lie on the Cytoplasmic side of the membrane.

It belongs to the integrin beta chain family. In terms of assembly, heterodimer of an alpha and a beta subunit. Interacts with FLNB. Interacts with HAX1. ITGAV:ITGB6 interacts with FBN1. ITGAV:ITGB6 interacts with TGFB1.

It localises to the cell membrane. Its subcellular location is the cell junction. The protein localises to the focal adhesion. Its function is as follows. Integrin alpha-V:beta-6 (ITGAV:ITGB6) is a receptor for fibronectin and cytotactin. It recognizes the sequence R-G-D in its ligands. ITGAV:ITGB6 acts as a receptor for fibrillin-1 (FBN1) and mediates R-G-D-dependent cell adhesion to FBN1. Integrin alpha-V:beta-6 (ITGAV:ITGB6) mediates R-G-D-dependent release of transforming growth factor beta-1 (TGF-beta-1) from regulatory Latency-associated peptide (LAP), thereby playing a key role in TGF-beta-1 activation. The protein is Integrin beta-6 (ITGB6) of Sus scrofa (Pig).